A 487-amino-acid polypeptide reads, in one-letter code: Acetylcholine receptor subunit beta-type acr-3 (487 aa).

Residues 1 to 20 form the signal peptide; that stretch reads MQKIWLFSIITIFLITELQC. The Extracellular segment spans residues 21-231; that stretch reads YPNSAEERLL…KIRRKALFYT (211 aa). Residue Asn46 is glycosylated (N-linked (GlcNAc...) asparagine). Cys151 and Cys165 form a disulfide bridge. The next 3 helical transmembrane spans lie at 232–252, 259–279, and 294–314; these read VILI…FYLP, ITLA…VSKI, and LLMT…IINV. At 315–439 the chain is on the cytoplasmic side; it reads YFRGPATHIM…WKFVSVVIDR (125 aa). The disordered stretch occupies residues 380–400; that stretch reads ISEQPKQTSRKDGSSSEEKLS. The chain crosses the membrane as a helical span at residues 440–460; the sequence is LLLYLFFAVTTGGTVGILLSA.

It belongs to the ligand-gated ion channel (TC 1.A.9) family. Acetylcholine receptor (TC 1.A.9.1) subfamily. As to quaternary structure, component of nicotinic acetylcholine receptor. In cholinergic motoneurons, composed of 2 non-alpha subunits acr-2 and acr-3, and 3 alpha subunits unc-38, unc-63 and acr-12.

It is found in the postsynaptic cell membrane. Its subcellular location is the cell membrane. Functionally, non-alpha subunit of nicotinic acetylcholine receptor (nAChR). Probably acts in cholinergic motoneurons to regulate presynaptic neurotransmitter release, thereby ensuring normal level of excitation of cholinergic motoneurons during locomotion. In Caenorhabditis elegans, this protein is Acetylcholine receptor subunit beta-type acr-3 (acr-3).